A 49-amino-acid polypeptide reads, in one-letter code: Large ribosomal subunit protein bL33A (49 aa).

It belongs to the bacterial ribosomal protein bL33 family.

This Bacillus licheniformis (strain ATCC 14580 / DSM 13 / JCM 2505 / CCUG 7422 / NBRC 12200 / NCIMB 9375 / NCTC 10341 / NRRL NRS-1264 / Gibson 46) protein is Large ribosomal subunit protein bL33A.